A 200-amino-acid polypeptide reads, in one-letter code: Cytochrome c biogenesis ATP-binding export protein CcmA (200 aa).

Residues 3–199 form the ABC transporter domain; the sequence is LSGRRVICVR…DSRELRIGGV (197 aa). 35–42 serves as a coordination point for ATP; it reads GRNGSGKT.

The protein belongs to the ABC transporter superfamily. CcmA exporter (TC 3.A.1.107) family. As to quaternary structure, the complex is composed of two ATP-binding proteins (CcmA) and two transmembrane proteins (CcmB).

It is found in the cell inner membrane. It catalyses the reaction heme b(in) + ATP + H2O = heme b(out) + ADP + phosphate + H(+). In terms of biological role, part of the ABC transporter complex CcmAB involved in the biogenesis of c-type cytochromes; once thought to export heme, this seems not to be the case, but its exact role is uncertain. Responsible for energy coupling to the transport system. This chain is Cytochrome c biogenesis ATP-binding export protein CcmA, found in Bradyrhizobium diazoefficiens (strain JCM 10833 / BCRC 13528 / IAM 13628 / NBRC 14792 / USDA 110).